The following is a 399-amino-acid chain: Tyrosine--tRNA ligase (399 aa).

The 'HIGH' region signature appears at 42–51; it reads PTAPDLHLGH. The short motif at 226 to 230 is the 'KMSKS' region element; sequence KMSKS. ATP is bound at residue K229. Residues 336 to 396 form the S4 RNA-binding domain; it reads MPIAAVLNKA…GRKAFARITL (61 aa).

This sequence belongs to the class-I aminoacyl-tRNA synthetase family. TyrS type 2 subfamily. Homodimer.

The protein resides in the cytoplasm. It carries out the reaction tRNA(Tyr) + L-tyrosine + ATP = L-tyrosyl-tRNA(Tyr) + AMP + diphosphate + H(+). Catalyzes the attachment of tyrosine to tRNA(Tyr) in a two-step reaction: tyrosine is first activated by ATP to form Tyr-AMP and then transferred to the acceptor end of tRNA(Tyr). This Pseudomonas fluorescens (strain ATCC BAA-477 / NRRL B-23932 / Pf-5) protein is Tyrosine--tRNA ligase.